Here is a 237-residue protein sequence, read N- to C-terminus: Ubiquinone/menaquinone biosynthesis C-methyltransferase UbiE (237 aa).

T60 and D80 together coordinate S-adenosyl-L-methionine.

Belongs to the class I-like SAM-binding methyltransferase superfamily. MenG/UbiE family.

It catalyses the reaction a 2-demethylmenaquinol + S-adenosyl-L-methionine = a menaquinol + S-adenosyl-L-homocysteine + H(+). The enzyme catalyses a 2-methoxy-6-(all-trans-polyprenyl)benzene-1,4-diol + S-adenosyl-L-methionine = a 5-methoxy-2-methyl-3-(all-trans-polyprenyl)benzene-1,4-diol + S-adenosyl-L-homocysteine + H(+). It functions in the pathway quinol/quinone metabolism; menaquinone biosynthesis; menaquinol from 1,4-dihydroxy-2-naphthoate: step 2/2. Its pathway is cofactor biosynthesis; ubiquinone biosynthesis. Its function is as follows. Methyltransferase required for the conversion of demethylmenaquinol (DMKH2) to menaquinol (MKH2) and the conversion of 2-polyprenyl-6-methoxy-1,4-benzoquinol (DDMQH2) to 2-polyprenyl-3-methyl-6-methoxy-1,4-benzoquinol (DMQH2). This Syntrophotalea carbinolica (strain DSM 2380 / NBRC 103641 / GraBd1) (Pelobacter carbinolicus) protein is Ubiquinone/menaquinone biosynthesis C-methyltransferase UbiE.